The primary structure comprises 377 residues: Glutamate 5-kinase (377 aa).

An ATP-binding site is contributed by K18. Positions 55, 142, and 154 each coordinate substrate. ATP contacts are provided by residues 174 to 175 and 216 to 222; these read SD and TGGMKSK. The PUA domain maps to 281-359; sequence QGEVVVDAGA…REIEALLGYK (79 aa).

The protein belongs to the glutamate 5-kinase family.

It is found in the cytoplasm. It carries out the reaction L-glutamate + ATP = L-glutamyl 5-phosphate + ADP. The protein operates within amino-acid biosynthesis; L-proline biosynthesis; L-glutamate 5-semialdehyde from L-glutamate: step 1/2. Catalyzes the transfer of a phosphate group to glutamate to form L-glutamate 5-phosphate. This is Glutamate 5-kinase from Meiothermus ruber.